The sequence spans 184 residues: Large ribosomal subunit protein uL6 (184 aa).

The protein belongs to the universal ribosomal protein uL6 family. As to quaternary structure, part of the 50S ribosomal subunit.

Its function is as follows. This protein binds to the 23S rRNA, and is important in its secondary structure. It is located near the subunit interface in the base of the L7/L12 stalk, and near the tRNA binding site of the peptidyltransferase center. The sequence is that of Large ribosomal subunit protein uL6 from Desulfitobacterium hafniense (strain Y51).